The sequence spans 237 residues: Maternal B9.10 protein (237 aa).

The protein belongs to the BTG family.

The protein is Maternal B9.10 protein of Xenopus laevis (African clawed frog).